A 75-amino-acid chain; its full sequence is uncharacterized protein (75 aa).

Belongs to the HSBP1 family.

This is an uncharacterized protein from Schizosaccharomyces pombe (strain 972 / ATCC 24843) (Fission yeast).